The sequence spans 241 residues: Histone H1-II (241 aa).

Positions 1-10 (MASDAPEVKA) are enriched in basic and acidic residues. Disordered stretches follow at residues 1–27 (MASDAPEVKAPKAKTQKKPKTAPTHPP) and 89–241 (NSYK…AKKA). Residues 11 to 20 (PKAKTQKKPK) show a composition bias toward basic residues. The H15 domain maps to 24–95 (THPPYIQMVT…KVKNSYKLSD (72 aa)). Over residues 99–111 (SKAKAAAKPKAAP) the composition is skewed to basic residues. Tandem repeats lie at residues 111–116 (PKKAAA), 117–122 (PKKAAA), and 123–128 (PKKAKA). An 8 X 6 AA repeats of P-K-K-A-[AK]-A region spans residues 111–217 (PKKAAAPKKA…KAATPKKAKA (107 aa)). Residues 129-155 (PKKEGEKKAVKPKSEKKAAKPKTEKKP) are compositionally biased toward basic and acidic residues. 2 stretches are compositionally biased toward basic residues: residues 156-184 (KAAKKPKAAKKPAAKKPAAKKPAAKKATP) and 194-241 (AAPK…AKKA). The DNA-binding element occupies 183-186 (TPKK). Tandem repeats lie at residues 184–189 (PKKAAA), 190–195 (PKKAAA), 196–201 (PKKAKA), 204–209 (PKKAKA), and 212–217 (PKKAKA). 2 consecutive DNA-binding regions follow at residues 203-206 (TPKK) and 211-214 (TPKK).

This sequence belongs to the histone H1/H5 family.

Its subcellular location is the nucleus. The protein resides in the chromosome. Histones H1 are necessary for the condensation of nucleosome chains into higher-order structures. The polypeptide is Histone H1-II (H1-II) (Volvox carteri (Green alga)).